The chain runs to 608 residues: Albumin (608 aa).

Positions Met-1–Ser-18 are cleaved as a signal peptide. Positions Arg-19–Arg-24 are excised as a propeptide. Albumin domains are found at residues Arg-19–Glu-211, Lys-212–Pro-403, and Leu-404–Ala-601. Residue His-27 participates in Cu cation binding. Ser-29 is subject to Phosphoserine. Residues Glu-30 and Asp-37 each coordinate Ca(2+). Cys-77 and Cys-86 form a disulfide bridge. Phosphoserine is present on residues Ser-82 and Ser-89. His-91 is a binding site for Zn(2+). Intrachain disulfides connect Cys-99–Cys-115, Cys-114–Cys-125, Cys-148–Cys-193, Cys-192–Cys-201, Cys-224–Cys-270, and Cys-269–Cys-277. Glu-268 serves as a coordination point for Ca(2+). Zn(2+)-binding residues include His-271 and Asp-273. Ca(2+)-binding residues include Asp-273, Glu-276, and Asp-279. 8 disulfides stabilise this stretch: Cys-289/Cys-303, Cys-302/Cys-313, Cys-340/Cys-385, Cys-384/Cys-393, Cys-416/Cys-462, Cys-461/Cys-472, Cys-485/Cys-501, and Cys-500/Cys-511. Ser-297 carries the phosphoserine modification. A Phosphoserine modification is found at Ser-443. A phosphothreonine mark is found at Thr-444 and Thr-446. The residue at position 460 (Lys-460) is an N6-succinyllysine. Ser-513 is modified (phosphoserine). 2 disulfide bridges follow: Cys-538/Cys-583 and Cys-582/Cys-591. Lys-543 carries the N6-succinyllysine modification. Residue Lys-558 is modified to N6-methyllysine. A Phosphothreonine modification is found at Thr-570. Lys-588 is subject to N6-succinyllysine.

This sequence belongs to the ALB/AFP/VDB family. Interacts with FCGRT; this interaction regulates ALB homeostasis. Interacts with TASOR. In plasma, occurs in a covalently-linked complex with chromophore-bound alpha-1-microglobulin; this interaction does not prevent fatty acid binding to ALB. As to expression, plasma.

The protein localises to the secreted. Binds water, Ca(2+), Na(+), K(+), fatty acids, hormones, bilirubin and drugs. Its main function is the regulation of the colloidal osmotic pressure of blood. Major zinc transporter in plasma, typically binds about 80% of all plasma zinc. Major calcium and magnesium transporter in plasma, binds approximately 45% of circulating calcium and magnesium in plasma. Potentially has more than two calcium-binding sites and might additionally bind calcium in a non-specific manner. The shared binding site between zinc and calcium at residue Asp-273 suggests a crosstalk between zinc and calcium transport in the blood. The rank order of affinity is zinc &gt; calcium &gt; magnesium. Binds to the bacterial siderophore enterobactin and inhibits enterobactin-mediated iron uptake of E.coli from ferric transferrin, and may thereby limit the utilization of iron and growth of enteric bacteria such as E.coli. Does not prevent iron uptake by the bacterial siderophore aerobactin. This is Albumin from Mesocricetus auratus (Golden hamster).